A 522-amino-acid polypeptide reads, in one-letter code: Wax ester synthase/diacylglycerol acyltransferase 4 (522 aa).

The span at 1–12 shows a compositional bias: basic and acidic residues; that stretch reads MEIETRPHISGD. The disordered stretch occupies residues 1 to 20; sequence MEIETRPHISGDEKEEEQPL. Over 1–205 the chain is Cytoplasmic; sequence MEIETRPHIS…SDSRLLWLVK (205 aa). His149 serves as the catalytic Proton acceptor. Residues 206 to 226 form a helical membrane-spanning segment; that stretch reads VIWTAVILGLNTVCDALEFIV. At 227–522 the chain is on the lumenal side; sequence TTLFVKDTET…QIAGLLYRML (296 aa). Residues Asn270 and Asn409 are each glycosylated (N-linked (GlcNAc...) asparagine).

This sequence in the N-terminal section; belongs to the long-chain O-acyltransferase family. Mostly expressed in roots, flowers and siliques.

The protein localises to the cell membrane. Its subcellular location is the endoplasmic reticulum membrane. It catalyses the reaction an acyl-CoA + a 1,2-diacyl-sn-glycerol = a triacyl-sn-glycerol + CoA. It carries out the reaction a long chain fatty alcohol + a fatty acyl-CoA = a wax ester + CoA. It functions in the pathway glycerolipid metabolism; triacylglycerol biosynthesis. Its pathway is lipid metabolism. Functionally, bifunctional wax ester synthase/diacylglycerol acyltransferase. Involved in cuticular wax biosynthesis. The chain is Wax ester synthase/diacylglycerol acyltransferase 4 from Arabidopsis thaliana (Mouse-ear cress).